The chain runs to 293 residues: Pantothenate synthetase (293 aa).

Methionine 38–histidine 45 provides a ligand contact to ATP. Histidine 45 acts as the Proton donor in catalysis. (R)-pantoate is bound at residue glutamine 69. Glutamine 69 contributes to the beta-alanine binding site. An ATP-binding site is contributed by glycine 155–aspartate 158. (R)-pantoate is bound at residue glutamine 161. Residue glutamine 192–arginine 195 participates in ATP binding.

Belongs to the pantothenate synthetase family. As to quaternary structure, homodimer.

It localises to the cytoplasm. It catalyses the reaction (R)-pantoate + beta-alanine + ATP = (R)-pantothenate + AMP + diphosphate + H(+). The protein operates within cofactor biosynthesis; (R)-pantothenate biosynthesis; (R)-pantothenate from (R)-pantoate and beta-alanine: step 1/1. Catalyzes the condensation of pantoate with beta-alanine in an ATP-dependent reaction via a pantoyl-adenylate intermediate. This Hyphomonas neptunium (strain ATCC 15444) protein is Pantothenate synthetase.